The sequence spans 785 residues: Peptide transporter family 2 (785 aa).

Transmembrane regions (helical) follow at residues 46–66 (FSFYGMRAVLTLYFFNILNFS), 72–92 (VLFHAFTVICYSSPLLGSILA), 99–119 (FWTIFFISIFYACGQILLAFS), 134–154 (LLGLLIVGLGTGGIKPCVSAF), 167–187 (ISLFFSMFYFSINAGSLISMW), 208–228 (FGIPAILMIVATLVFMAGSFW), 303–323 (VIVMMIPVPMFWALYDQQGST), 345–365 (MGVLNAFLILFFIPIFQSIVY), and 382–402 (AGGGILTAVSFFVCGIVQLFV). Asn467 is a glycosylation site (N-linked (GlcNAc...) asparagine). Helical transmembrane passes span 670–690 (ILWQIPQYVILTAGEVLFSIT), 711–731 (WLFTTAIGDLIVVVIFMLNIF), and 738–758 (MFVFGGIMLFVIFVFILLAVF).

Belongs to the major facilitator superfamily. Proton-dependent oligopeptide transporter (POT/PTR) (TC 2.A.17) family. In terms of tissue distribution, expressed in vulval, pharyngeal and anal muscles.

It localises to the membrane. Proton-dependent uptake of di- or tripeptides, and to a minor extent tetrapeptides. Transport is independent of sodium and chloride ions. Protein shows high affinity to peptide substrates. This Caenorhabditis elegans protein is Peptide transporter family 2 (pept-2).